Here is a 148-residue protein sequence, read N- to C-terminus: Thioredoxin H8 (148 aa).

One can recognise a Thioredoxin domain in the interval 1 to 145 (MGANVSTPDQ…LERKLNKYTQ (145 aa)). Residues cysteine 71 and cysteine 74 each act as nucleophile in the active site. An intrachain disulfide couples cysteine 71 to cysteine 74.

Belongs to the thioredoxin family. Plant H-type subfamily.

Its subcellular location is the cytoplasm. Probable thiol-disulfide oxidoreductase that may be involved in the redox regulation of a number of cytosolic enzymes. This is Thioredoxin H8 (TRX8) from Arabidopsis thaliana (Mouse-ear cress).